Consider the following 333-residue polypeptide: Adenosine deaminase (333 aa).

Residues His12 and His14 each coordinate Zn(2+). The substrate site is built by His14, Asp16, and Gly170. His197 provides a ligand contact to Zn(2+). Glu200 functions as the Proton donor in the catalytic mechanism. Asp278 lines the Zn(2+) pocket. Asp279 lines the substrate pocket.

The protein belongs to the metallo-dependent hydrolases superfamily. Adenosine and AMP deaminases family. Adenosine deaminase subfamily. Zn(2+) serves as cofactor.

It carries out the reaction adenosine + H2O + H(+) = inosine + NH4(+). The catalysed reaction is 2'-deoxyadenosine + H2O + H(+) = 2'-deoxyinosine + NH4(+). In terms of biological role, catalyzes the hydrolytic deamination of adenosine and 2-deoxyadenosine. In Pseudoalteromonas translucida (strain TAC 125), this protein is Adenosine deaminase.